Here is a 193-residue protein sequence, read N- to C-terminus: Guanylate kinase (193 aa).

Residues 8 to 188 (GRLVVLVGPS…ACEQLVSLFV (181 aa)) enclose the Guanylate kinase-like domain. 15-22 (GPSAVGKS) is a binding site for ATP.

It belongs to the guanylate kinase family.

Its subcellular location is the cytoplasm. It catalyses the reaction GMP + ATP = GDP + ADP. Essential for recycling GMP and indirectly, cGMP. The polypeptide is Guanylate kinase (Nocardia farcinica (strain IFM 10152)).